The primary structure comprises 245 residues: Inner membrane protein YgaZ (245 aa).

Residues Met-1–Pro-24 are Cytoplasmic-facing. A helical transmembrane segment spans residues Ile-25–Phe-45. Over Ser-46–Gln-63 the chain is Periplasmic. The helical transmembrane segment at Phe-64 to Met-84 threads the bilayer. The Cytoplasmic portion of the chain corresponds to Ala-85–Lys-109. The chain crosses the membrane as a helical span at residues Thr-110 to Val-130. At Arg-131–Trp-140 the chain is on the periplasmic side. Residues Met-141–Phe-161 traverse the membrane as a helical segment. Residues Ser-162 to Ala-172 are Cytoplasmic-facing. A helical transmembrane segment spans residues Val-173–Phe-193. Topologically, residues Gln-194–Leu-205 are periplasmic. Residues Val-206–Val-226 form a helical membrane-spanning segment. The Cytoplasmic segment spans residues Cys-227 to Leu-245.

It belongs to the AzlC family.

The protein localises to the cell inner membrane. The protein is Inner membrane protein YgaZ (ygaZ) of Escherichia coli (strain K12).